A 211-amino-acid chain; its full sequence is Large ribosomal subunit protein uL4 (211 aa).

The interval 40 to 85 (QQAHSRQGTASTLTRSEVRGGGRKPYKQKGTGRARQGSVRTPLRPG) is disordered. The segment covering 41–54 (QAHSRQGTASTLTR) has biased composition (polar residues). Basic residues predominate over residues 60–71 (GGRKPYKQKGTG).

It belongs to the universal ribosomal protein uL4 family. Part of the 50S ribosomal subunit.

One of the primary rRNA binding proteins, this protein initially binds near the 5'-end of the 23S rRNA. It is important during the early stages of 50S assembly. It makes multiple contacts with different domains of the 23S rRNA in the assembled 50S subunit and ribosome. In terms of biological role, forms part of the polypeptide exit tunnel. The protein is Large ribosomal subunit protein uL4 of Synechococcus sp. (strain CC9311).